Here is a 468-residue protein sequence, read N- to C-terminus: 3-isopropylmalate dehydratase large subunit (468 aa).

The [4Fe-4S] cluster site is built by C347, C408, and C411.

It belongs to the aconitase/IPM isomerase family. LeuC type 1 subfamily. In terms of assembly, heterodimer of LeuC and LeuD. [4Fe-4S] cluster is required as a cofactor.

It catalyses the reaction (2R,3S)-3-isopropylmalate = (2S)-2-isopropylmalate. The protein operates within amino-acid biosynthesis; L-leucine biosynthesis; L-leucine from 3-methyl-2-oxobutanoate: step 2/4. Functionally, catalyzes the isomerization between 2-isopropylmalate and 3-isopropylmalate, via the formation of 2-isopropylmaleate. The polypeptide is 3-isopropylmalate dehydratase large subunit (Janthinobacterium sp. (strain Marseille) (Minibacterium massiliensis)).